We begin with the raw amino-acid sequence, 110 residues long: Competence pilus inhibition repressor (110 aa).

One can recognise an HTH cro/C1-type domain in the interval valine 7–isoleucine 61. The H-T-H motif DNA-binding region spans glutamine 18–asparagine 37.

Represses transcription of the PilB-specific inhibitory protein CpiA. The sequence is that of Competence pilus inhibition repressor from Acinetobacter baylyi (strain ATCC 33305 / BD413 / ADP1).